We begin with the raw amino-acid sequence, 203 residues long: Ras-related protein Rab5A (203 aa).

Residue 18–26 (GDVGTGKSS) participates in GTP binding. The Effector region motif lies at 40-48 (QESTIGAAF). GTP contacts are provided by residues 66-70 (DTAGQ), 124-127 (NKAD), and 154-155 (SA). Residues Cys201 and Cys202 are each lipidated (S-geranylgeranyl cysteine).

The protein belongs to the small GTPase superfamily. Rab family. Interacts with VPS9A. Interacts with NSF and RBP-L. As to expression, highly expressed in roots. Expressed at low levels in shoots, flowers and grains.

It localises to the prevacuolar compartment membrane. The protein localises to the golgi apparatus membrane. Its subcellular location is the cell membrane. The protein resides in the protein storage vacuole membrane. Plays an important role in intracellular trafficking of seed storage proteins to the protein storage vacuoles (PSVs). Participates in the transport of the proglutelins from the Golgi apparatus to the PSVs in endosperm. Functions cooperatively with VPS9A to regulate post-Golgi dense vesicle-mediated transport of storage proteins to the type II protein bodies (PBII) protein storage vacuoles in developing endosperm. Involved in the maintenance of the general structural organization of the endomembrane system in developing endosperm. Binds GTP in vitro. Forms a quaternary complex with the two glutelin zipcode RNA-binding proteins RBP-L and RBP-P, and the membrane trafficking factor NSF. This quaternay complex carries glutelin mRNAs for active transport on endosomes to the cortical endoplasmic reticulum membrane, and enables endosome-mediated glutelin mRNA transport in endosperm cells. This Oryza sativa subsp. japonica (Rice) protein is Ras-related protein Rab5A.